The sequence spans 284 residues: Bifunctional protein FolD (284 aa).

Residues 165–167 (GRS), S190, and I231 contribute to the NADP(+) site.

Belongs to the tetrahydrofolate dehydrogenase/cyclohydrolase family. In terms of assembly, homodimer.

The enzyme catalyses (6R)-5,10-methylene-5,6,7,8-tetrahydrofolate + NADP(+) = (6R)-5,10-methenyltetrahydrofolate + NADPH. It catalyses the reaction (6R)-5,10-methenyltetrahydrofolate + H2O = (6R)-10-formyltetrahydrofolate + H(+). It functions in the pathway one-carbon metabolism; tetrahydrofolate interconversion. Catalyzes the oxidation of 5,10-methylenetetrahydrofolate to 5,10-methenyltetrahydrofolate and then the hydrolysis of 5,10-methenyltetrahydrofolate to 10-formyltetrahydrofolate. This is Bifunctional protein FolD from Clostridium kluyveri (strain ATCC 8527 / DSM 555 / NBRC 12016 / NCIMB 10680 / K1).